The chain runs to 103 residues: Cystatin-A8 (103 aa).

The tract at residues 1–20 is disordered; that stretch reads MESEEMLAGGLTEPRPATPE. The short motif at 51–55 is the Secondary area of contact element; that stretch reads QVVAG.

It belongs to the cystatin family.

The protein resides in the cytoplasm. In terms of biological role, this is an intracellular thiol proteinase inhibitor. The protein is Cystatin-A8 of Sus scrofa (Pig).